Here is a 540-residue protein sequence, read N- to C-terminus: Chaperonin GroEL (540 aa).

Residues 29–32 (TLGP), 86–90 (DGTTT), Gly413, and Asp493 contribute to the ATP site. The disordered stretch occupies residues 520–540 (AEKPEPKPAPGPADPGAGMDF).

Belongs to the chaperonin (HSP60) family. In terms of assembly, forms a cylinder of 14 subunits composed of two heptameric rings stacked back-to-back. Interacts with the co-chaperonin GroES.

Its subcellular location is the cytoplasm. The catalysed reaction is ATP + H2O + a folded polypeptide = ADP + phosphate + an unfolded polypeptide.. Together with its co-chaperonin GroES, plays an essential role in assisting protein folding. The GroEL-GroES system forms a nano-cage that allows encapsulation of the non-native substrate proteins and provides a physical environment optimized to promote and accelerate protein folding. In Tropheryma whipplei (strain TW08/27) (Whipple's bacillus), this protein is Chaperonin GroEL.